Reading from the N-terminus, the 88-residue chain is Defensin-like protein 24 (88 aa).

The first 23 residues, 1–23 (MASSKFVLFAILALSLLLSGTEA), serve as a signal peptide directing secretion. 4 cysteine pairs are disulfide-bonded: Cys37-Cys87, Cys47-Cys72, Cys56-Cys83, and Cys60-Cys85.

This sequence belongs to the DEFL family.

It localises to the secreted. The sequence is that of Defensin-like protein 24 from Arabidopsis thaliana (Mouse-ear cress).